The sequence spans 605 residues: MHKYRTHNCNELQLSNVGQEVKLSGWVHRRRDHGNLVFIDLRDHYGITQIVFTDQNQQLMYDASRLCYESVITVSGTVVARSLDTINNKLPTGYVEVLAMECIVESASSPLPFVINNEKEAPEESRLKHRFLDLRREKLHNNIILRSQVIAHIRHLMIARGFTELQTPILTSSSPEGARDFLVPSRIHPGKFYALPQAPQQFKQLLMVAGFDRYFQIAPCFRDEDARADRSPGEFYQLDLEMSFVTQEDIFNTIEPVLYDLFTKFTNKTVSNTPFVRIPYNESMLKYGSDKPDLRNPIIISDVTEVFRDSNFTIFRENIKKGSVVHAIPAPQAASLPRSFFDKMIEFAISKGARGLGYIQFSESGEAKGPLSKFLTGQQLEILKATANTSNGDAVFFVSDKKDEAVKLCGKVRIKLGEELNLLEKDCFKFCWITDFPFYELNEETGKIDFSHNPFSMPQGGIDALEQAKTTEELLALTAYQYDIVCNGIELSSGAIRNHKPEIMYKAFSIAGYSAEEVEQRFGAMIKAFRFGAPPHGGIAPGIDRIVMLLAEATNIREIIAFPLNQQAEDLLMNAPSYVEEKALKELSIMLSPSSRKIHKKNTNL.

Glutamate 176 provides a ligand contact to L-aspartate. Residues 200 to 203 (QQFK) are aspartate. L-aspartate contacts are provided by arginine 222 and histidine 452. 222-224 (RDE) is a binding site for ATP. Residue glutamate 490 participates in ATP binding. Residue arginine 497 participates in L-aspartate binding. 542–545 (GIDR) contributes to the ATP binding site.

It belongs to the class-II aminoacyl-tRNA synthetase family. Type 1 subfamily. As to quaternary structure, homodimer.

It localises to the cytoplasm. The catalysed reaction is tRNA(Asx) + L-aspartate + ATP = L-aspartyl-tRNA(Asx) + AMP + diphosphate. Functionally, aspartyl-tRNA synthetase with relaxed tRNA specificity since it is able to aspartylate not only its cognate tRNA(Asp) but also tRNA(Asn). Reaction proceeds in two steps: L-aspartate is first activated by ATP to form Asp-AMP and then transferred to the acceptor end of tRNA(Asp/Asn). In Rickettsia prowazekii (strain Madrid E), this protein is Aspartate--tRNA(Asp/Asn) ligase.